A 266-amino-acid chain; its full sequence is tRNA pseudouridine synthase A (266 aa).

The Nucleophile role is filled by Asp-57. Residue Tyr-115 participates in substrate binding.

This sequence belongs to the tRNA pseudouridine synthase TruA family. In terms of assembly, homodimer.

It carries out the reaction uridine(38/39/40) in tRNA = pseudouridine(38/39/40) in tRNA. Formation of pseudouridine at positions 38, 39 and 40 in the anticodon stem and loop of transfer RNAs. In Buchnera aphidicola subsp. Acyrthosiphon pisum (strain Tuc7), this protein is tRNA pseudouridine synthase A.